The primary structure comprises 94 residues: Pyrimidine/purine nucleoside phosphorylase 2 (94 aa).

Belongs to the nucleoside phosphorylase PpnP family.

The enzyme catalyses a purine D-ribonucleoside + phosphate = a purine nucleobase + alpha-D-ribose 1-phosphate. The catalysed reaction is adenosine + phosphate = alpha-D-ribose 1-phosphate + adenine. It catalyses the reaction cytidine + phosphate = cytosine + alpha-D-ribose 1-phosphate. It carries out the reaction guanosine + phosphate = alpha-D-ribose 1-phosphate + guanine. The enzyme catalyses inosine + phosphate = alpha-D-ribose 1-phosphate + hypoxanthine. The catalysed reaction is thymidine + phosphate = 2-deoxy-alpha-D-ribose 1-phosphate + thymine. It catalyses the reaction uridine + phosphate = alpha-D-ribose 1-phosphate + uracil. It carries out the reaction xanthosine + phosphate = alpha-D-ribose 1-phosphate + xanthine. Catalyzes the phosphorolysis of diverse nucleosides, yielding D-ribose 1-phosphate and the respective free bases. Can use uridine, adenosine, guanosine, cytidine, thymidine, inosine and xanthosine as substrates. Also catalyzes the reverse reactions. The sequence is that of Pyrimidine/purine nucleoside phosphorylase 2 from Psychrobacter arcticus (strain DSM 17307 / VKM B-2377 / 273-4).